Here is a 370-residue protein sequence, read N- to C-terminus: Gap junction delta-4 protein (370 aa).

Topologically, residues 1–19 are cytoplasmic; that stretch reads MEGVDLLGFLIITLNCNVT. Residues 20–40 form a helical membrane-spanning segment; sequence MVGKLWFVLTMLLRMLVIVLA. Residues 41 to 76 lie on the Extracellular side of the membrane; that stretch reads GRPVYQDEQERFVCNTLQPGCANVCYDVFSPVSHLR. Residues 77–97 form a helical membrane-spanning segment; the sequence is FWLIQGVCVLLPSAVFSVYVL. Over 98 to 146 the chain is Cytoplasmic; it reads HRGATLAALGPRRCPDPREPASGQRRCPRPFGERGGLQVPDFSAGYIIH. A helical transmembrane segment spans residues 147 to 167; it reads LLLRTLLEAAFGALHYFLFGF. The Extracellular segment spans residues 168-196; it reads LAPKKFPCTRPPCTGVVDCYVSRPTEKSL. Residues 197–217 traverse the membrane as a helical segment; the sequence is LMLFLWAVSALSFLLGLADLV. Residues 218–370 lie on the Cytoplasmic side of the membrane; it reads CSLRRRMRRR…HLRARKSEWV (153 aa). The tract at residues 224–370 is disordered; sequence MRRRPGPPTS…HLRARKSEWV (147 aa). Residues 246–260 are compositionally biased toward basic and acidic residues; it reads AEGRRTDEEGGREEE. The segment covering 331–346 has biased composition (low complexity); that stretch reads PSAAPSRLAAPPSCSS.

The protein belongs to the connexin family. Delta-type subfamily. In terms of assembly, a connexon is composed of a hexamer of connexins. Expressed in pancreas, kidney, skeletal muscle, liver, placenta, and heart.

The protein localises to the cell membrane. It localises to the cell junction. Its subcellular location is the gap junction. Functionally, one gap junction consists of a cluster of closely packed pairs of transmembrane channels, the connexons, through which materials of low MW diffuse from one cell to a neighboring cell. The protein is Gap junction delta-4 protein (GJD4) of Homo sapiens (Human).